A 750-amino-acid chain; its full sequence is K(+)-insensitive pyrophosphate-energized proton pump (750 aa).

Transmembrane regions (helical) follow at residues 1 to 21 (MYGLVVCLFGMIFGLIQYQGI), 51 to 71 (FIIILWALVAAIIVAYFGGLN), 78 to 98 (VVFILACSLLGIAGSYTVAWF), 133 to 153 (IGMLLISIELFAMLCILLFIP), and 161 to 181 (FIGFAIGESLGASVLRIAGGI). Residue lysine 184 participates in substrate binding. Mg(2+) contacts are provided by aspartate 187, aspartate 191, and aspartate 216. The next 6 helical transmembrane spans lie at 227–247 (DGFETYGVTGVALISFILLAI), 257–277 (LVWIFAMRLVMIVASAVSYWV), 301–321 (LVWLTSIVSIVLTYIASYMLI), 327–347 (GTMWWKLASIITCGTIAGALI), 391–411 (WMGLAIIVLMGAAFGFSTLGL), and 420–440 (VFAFGLVAFGFLSMGPVTIAV). Aspartate 448 contributes to the Mg(2+) binding site. 4 helical membrane-spanning segments follow: residues 503-523 (VLIGTAVVGSTTMIFSIIMIL), 538-558 (ILWPPFLLGLLMGGAVIYWFT), 607-627 (GMINLFLTIFFSTLAFACLES), and 629-649 (LFIGYLISIALFGLYQAIFMA). Residues aspartate 656, aspartate 681, and aspartate 685 each contribute to the Ca(2+) site. Residue lysine 688 coordinates substrate. 2 consecutive transmembrane segments (helical) span residues 694 to 714 (ALNPIIKFTTLFGLLAIELAI) and 716 to 736 (LPTTISVSLAVVFFLLSLVFV).

It belongs to the H(+)-translocating pyrophosphatase (TC 3.A.10) family. K(+)-insensitive subfamily. In terms of assembly, homodimer. It depends on Mg(2+) as a cofactor.

Its subcellular location is the cell inner membrane. The enzyme catalyses diphosphate + H2O + H(+)(in) = 2 phosphate + 2 H(+)(out). In terms of biological role, proton pump that utilizes the energy of pyrophosphate hydrolysis as the driving force for proton movement across the membrane. Generates a proton motive force. The protein is K(+)-insensitive pyrophosphate-energized proton pump of Chlorobaculum tepidum (strain ATCC 49652 / DSM 12025 / NBRC 103806 / TLS) (Chlorobium tepidum).